We begin with the raw amino-acid sequence, 310 residues long: tRNA dimethylallyltransferase (310 aa).

ATP is bound at residue 14 to 21; the sequence is GPTASGKS. Residue 16–21 participates in substrate binding; the sequence is TASGKS. Interaction with substrate tRNA stretches follow at residues 39–42 and 163–167; these read DSMQ and QRIVR.

Belongs to the IPP transferase family. In terms of assembly, monomer. The cofactor is Mg(2+).

It carries out the reaction adenosine(37) in tRNA + dimethylallyl diphosphate = N(6)-dimethylallyladenosine(37) in tRNA + diphosphate. In terms of biological role, catalyzes the transfer of a dimethylallyl group onto the adenine at position 37 in tRNAs that read codons beginning with uridine, leading to the formation of N6-(dimethylallyl)adenosine (i(6)A). The sequence is that of tRNA dimethylallyltransferase from Brucella melitensis biotype 2 (strain ATCC 23457).